The chain runs to 330 residues: Quinone oxidoreductase (330 aa).

A2 carries the N-acetylalanine modification. K23 carries the post-translational modification N6-acetyllysine. Residues Y53, 158–161, G181, H200, N229, 246–249, and 269–271 contribute to the NADP(+) site; these read SGGV, VGSK, and VTL. S248 is modified (phosphoserine).

Belongs to the zinc-containing alcohol dehydrogenase family. Quinone oxidoreductase subfamily. Homotetramer.

Its subcellular location is the cytoplasm. The enzyme catalyses 2 a quinone + NADPH + H(+) = 2 a 1,4-benzosemiquinone + NADP(+). Its function is as follows. Does not have alcohol dehydrogenase activity. Binds NADP and acts through a one-electron transfer process. Orthoquinones, such as 1,2-naphthoquinone or 9,10-phenanthrenequinone, are the best substrates (in vitro). May act in the detoxification of xenobiotics. Interacts with (AU)-rich elements (ARE) in the 3'-UTR of target mRNA species and enhances their stability. NADPH binding interferes with mRNA binding. The protein is Quinone oxidoreductase (CRYZ) of Lama guanicoe (Guanaco).